We begin with the raw amino-acid sequence, 219 residues long: MTKSIYEFWISQGKDKLRLPVLPEQIDISNTIQNESVKVASFGEITFIDKPGAKEISFSSFFPKKHSPLAEYKGFPSPENAIAKIEKWVKSKKPVQFLITGTKINLTCSIEVFSYTEGQKDIGDRDYEIKLKEYKTASPRKIKQKKKTKKKRPSKSAPKTYTVKKGDTLWDLAGKFYGDSTKWRKIWKVNKKAMIKRSKRNIRQPGHWIFPGQKLKIPQ.

Positions 139 to 154 are enriched in basic residues; sequence PRKIKQKKKTKKKRPS. A disordered region spans residues 139–160; sequence PRKIKQKKKTKKKRPSKSAPKT. Positions 159 to 217 constitute a LysM domain; sequence KTYTVKKGDTLWDLAGKFYGDSTKWRKIWKVNKKAMIKRSKRNIRQPGHWIFPGQKLKI.

This is an uncharacterized protein from Bacillus subtilis (strain 168).